The primary structure comprises 204 residues: Peptide deformylase (204 aa).

The Fe cation site is built by cysteine 131 and histidine 174. Glutamate 175 is a catalytic residue. Histidine 178 contacts Fe cation.

Belongs to the polypeptide deformylase family. Fe(2+) is required as a cofactor.

It carries out the reaction N-terminal N-formyl-L-methionyl-[peptide] + H2O = N-terminal L-methionyl-[peptide] + formate. Removes the formyl group from the N-terminal Met of newly synthesized proteins. Requires at least a dipeptide for an efficient rate of reaction. N-terminal L-methionine is a prerequisite for activity but the enzyme has broad specificity at other positions. This Streptococcus gordonii (strain Challis / ATCC 35105 / BCRC 15272 / CH1 / DL1 / V288) protein is Peptide deformylase.